We begin with the raw amino-acid sequence, 178 residues long: Large ribosomal subunit protein uL10 (178 aa).

The protein belongs to the universal ribosomal protein uL10 family. As to quaternary structure, part of the ribosomal stalk of the 50S ribosomal subunit. The N-terminus interacts with L11 and the large rRNA to form the base of the stalk. The C-terminus forms an elongated spine to which L12 dimers bind in a sequential fashion forming a multimeric L10(L12)X complex.

Functionally, forms part of the ribosomal stalk, playing a central role in the interaction of the ribosome with GTP-bound translation factors. The sequence is that of Large ribosomal subunit protein uL10 from Petrotoga mobilis (strain DSM 10674 / SJ95).